The chain runs to 184 residues: UPF0340 protein TTE0860 (184 aa).

The protein belongs to the UPF0340 family.

In Caldanaerobacter subterraneus subsp. tengcongensis (strain DSM 15242 / JCM 11007 / NBRC 100824 / MB4) (Thermoanaerobacter tengcongensis), this protein is UPF0340 protein TTE0860.